A 133-amino-acid polypeptide reads, in one-letter code: MARKKEFKYRGYTFEELINMSLEDLSKLLPSRQRRSLKRGLTPEQKKLLRKIRLAKKGKYKKPIRTHSRDMVILPEMVGMMIYVHNGKEFVPVQIREEMIGHYIGEFALTRKRVQHGSPGVGATRSSMFVAIK.

This sequence belongs to the universal ribosomal protein uS19 family.

Protein S19 forms a complex with S13 that binds strongly to the 16S ribosomal RNA. The polypeptide is Small ribosomal subunit protein uS19 (Thermococcus sibiricus (strain DSM 12597 / MM 739)).